Reading from the N-terminus, the 4473-residue chain is Plectin (4473 aa).

Calponin-homology (CH) domains are found at residues 1–74 (DGHN…LHFQ) and 87–192 (MTAK…DAMP). The interval 1 to 192 (DGHNLISLLE…YVSSLYDAMP (192 aa)) is actin-binding. Positions 1–1259 (DGHNLISLLE…SELTTLTSQY (1259 aa)) are globular 1. The stretch at 449–508 (RYLQDLLAWVEENQRRIDSAEWGVDLPSVEAQLGSHRGMHQSIEEFRAKIERARNDESQL) is one Spectrin 1 repeat. Ser509 carries the phosphoserine modification. 2 Spectrin repeats span residues 529–613 (KLLN…REDH) and 626–719 (LQTQ…AIVQ). Thr604 is modified (phosphothreonine). The region spanning 730–787 (RGHVPLMAVCDYKQVEVTVHKGDQCQLVGPAQPSHWKVLRGPSSEAAVPSVCFLVPPP) is the SH3 domain. Position 836 is a phosphoserine (Ser836). The Spectrin 4 repeat unit spans residues 1104-1204 (RERVNQLLER…QKFAKQYINA (101 aa)). Ser1224 is subject to Phosphoserine. The stretch at 1258 to 2548 (QYIKFISETL…EEIAATQAAA (1291 aa)) forms a coiled coil. Residues 1260-2544 (IKFISETLRR…LAHSEEIAAT (1285 aa)) are central fibrous rod domain. 2 disordered regions span residues 1274 to 1293 (ERLA…EGEA) and 1407 to 1434 (RAEE…DESQ). At Ser1510 the chain carries Phosphoserine. An N6-acetyllysine modification is found at Lys1514. Disordered regions lie at residues 1529-1550 (VTQL…ERAR), 1582-1616 (SLAQ…RELA), 1881-1929 (AEDT…AARQ), 1950-1971 (LRER…AAQK), and 2003-2098 (ERLR…KHKK). Composition is skewed to basic and acidic residues over residues 1587 to 1616 (DAEK…RELA), 1881 to 1897 (AEDT…EAAR), and 1905 to 1917 (EEQR…ERVQ). A compositionally biased stretch (low complexity) spans 1959-1968 (ARQLQLAQEA). A compositionally biased stretch (basic and acidic residues) spans 2003-2047 (ERLRGEAEAARRAAEEAEEAREQAEREAAQSRKQVEEAERLKQSA). The segment covering 2048–2061 (EEQAQARAQAQAAA) has biased composition (low complexity). Over residues 2062-2077 (EKLRKEAEQEAARRAQ) the composition is skewed to basic and acidic residues. A Phosphoserine modification is found at Ser2420. At Lys2425 the chain carries N6-acetyllysine. The disordered stretch occupies residues 2457–2476 (REEQQRQQRQMEQEKQELVA). The tract at residues 2545 to 4473 (QAAAAKALPN…SLGGPESAVA (1929 aa)) is globular 2. Ser2563 and Ser2591 each carry phosphoserine. Plectin repeat units lie at residues 2615–2652 (RQYL…PGTA), 2653–2690 (LILL…PELH), 2691–2728 (HKLL…RDHA), 2729–2766 (IRLL…EEMS), and 2770–2804 (ADPG…PETG). Position 2675 is a phosphothreonine (Thr2675). The residue at position 2822 (Tyr2822) is a Phosphotyrosine. Residues Lys2842 and Lys2880 each carry the N6-acetyllysine modification. 5 Plectin repeats span residues 2905-2942 (ALVP…ADSV), 2943-2980 (RRAL…PDVA), 2981-3018 (VALL…PELH), 3019-3056 (EKLL…REQG), and 3057-3094 (LRLL…KETN). Residue Tyr3151 is modified to Phosphotyrosine. Lys3209 carries the N6-acetyllysine modification. Plectin repeat units lie at residues 3274–3311 (RTLL…PSTA), 3312–3349 (TLLL…PELH), 3350–3387 (EKLL…REHA), 3388–3425 (IRLL…EEMS), and 3429–3463 (ADPS…PETG). The residue at position 3574 (Thr3574) is a Phosphothreonine. Tyr3579 bears the Phosphotyrosine mark. 6 Plectin repeats span residues 3609-3646 (WRYL…AEVA), 3647-3684 (RLLL…PELH), 3685-3722 (DRLL…AEEA), 3723-3760 (LRLL…KDTH), 3764-3797 (SEPS…DGSG), and 3800-3834 (LLPL…EATA). Thr3819 carries the phosphothreonine modification. Residue Ser3843 is modified to Phosphoserine. Plectin repeat units lie at residues 3852-3889 (QKFL…PGTA), 3890-3927 (FELL…PEFK), 3928-3965 (DRLL…KDHG), 3966-4003 (IRLL…EEMN), 4007-4041 (TDPS…PQTG), and 4043-4094 (RLLP…HQTY). A binding to intermediate filaments region spans residues 4039–4089 (QTGLRLLPLKEKKRERKTSSKSSVRKRRVVIVDPETSKEMSVYEAYRKGLI). Phosphoserine is present on residues Ser4171, Ser4173, Ser4174, Ser4175, Ser4178, Ser4179, Ser4180, and Ser4181. Phosphotyrosine is present on Tyr4182. Phosphoserine is present on residues Ser4185, Ser4189, and Ser4195. Plectin repeat units lie at residues 4197 to 4234 (SDPT…NITG), 4235 to 4272 (QRLL…KIMV), 4273 to 4310 (DRIN…YEAG), 4311 to 4348 (QRFL…ARTA), and 4349 to 4386 (QKLR…EGTG). At Thr4200 the chain carries Phosphothreonine. Phosphothreonine; by CDK1 is present on Thr4328. Ser4396 and Ser4402 each carry phosphoserine. Residues 4400 to 4460 (YYSPYSVSGS…SGYGRRYASG (61 aa)) show a composition bias toward low complexity. The tract at residues 4400 to 4473 (YYSPYSVSGS…SLGGPESAVA (74 aa)) is disordered. Tyr4404 is modified (phosphotyrosine). 3 positions are modified to phosphoserine: Ser4405, Ser4407, and Ser4411. Thr4412 carries the phosphothreonine modification. A 4 X 4 AA tandem repeats of G-S-R-X region spans residues 4414-4429 (GSRTGSRTGSRAGSRR). Ser4415 carries the phosphoserine modification. Omega-N-methylarginine occurs at positions 4416 and 4429. Ser4431 and Ser4464 each carry phosphoserine.

Belongs to the plakin or cytolinker family. In terms of assembly, homodimer or homotetramer. Interacts (via actin-binding domain) with SYNE3. Interacts (via calponin-homology (CH) 1 domain) with VIM (via rod region). Interacts (via N-terminus) with DST isoform 2 (via N-terminus). Interacts with FER. Interacts with TOR1A. Interacts with ANK3. Identified in complexes that contain VIM, EZR, AHNAK, BFSP1, BFSP2, ANK2, PLEC, PRX and spectrin. Phosphorylated by CDK1; regulates dissociation from intermediate filaments during mitosis.

The protein resides in the cytoplasm. It localises to the cytoskeleton. Its subcellular location is the cell junction. It is found in the hemidesmosome. The protein localises to the cell projection. The protein resides in the podosome. In terms of biological role, interlinks intermediate filaments with microtubules and microfilaments and anchors intermediate filaments to desmosomes or hemidesmosomes. May be involved not only in the cross-linking and stabilization of cytoskeletal intermediate filaments network, but also in the regulation of their dynamics. The protein is Plectin (PLEC) of Cricetulus griseus (Chinese hamster).